The chain runs to 91 residues: Small ribosomal subunit protein uS19m (91 aa).

This sequence belongs to the universal ribosomal protein uS19 family. In terms of assembly, component of the mitochondrial small ribosomal subunit (mt-SSU). Mature yeast 74S mitochondrial ribosomes consist of a small (37S) and a large (54S) subunit. The 37S small subunit contains a 15S ribosomal RNA (15S mt-rRNA) and 34 different proteins. The 54S large subunit contains a 21S rRNA (21S mt-rRNA) and 46 different proteins.

It is found in the mitochondrion. Component of the mitochondrial ribosome (mitoribosome), a dedicated translation machinery responsible for the synthesis of mitochondrial genome-encoded proteins, including at least some of the essential transmembrane subunits of the mitochondrial respiratory chain. The mitoribosomes are attached to the mitochondrial inner membrane and translation products are cotranslationally integrated into the membrane. This Saccharomyces cerevisiae (strain ATCC 204508 / S288c) (Baker's yeast) protein is Small ribosomal subunit protein uS19m (RSM19).